A 186-amino-acid polypeptide reads, in one-letter code: MAAENPSVSGVSGRYATALFELARDEKAVDAVKADLDRFKAMLADSPELTRLVRSPVFSAETQSKALAAVLDKAGFAGTTAKFLKVLTANRRLFTVTDVIRAYGALVAKFKGEATADVTVAEPLSEKNLDALKTALKSVTGKDVALNVNVDPAIIGGLVVKLGSRMVDSSLRTKLNSIKHAMKEAG.

The protein belongs to the ATPase delta chain family. In terms of assembly, F-type ATPases have 2 components, F(1) - the catalytic core - and F(0) - the membrane proton channel. F(1) has five subunits: alpha(3), beta(3), gamma(1), delta(1), epsilon(1). CF(0) has four main subunits: a(1), b(1), b'(1) and c(10-14). The alpha and beta chains form an alternating ring which encloses part of the gamma chain. F(1) is attached to F(0) by a central stalk formed by the gamma and epsilon chains, while a peripheral stalk is formed by the delta, b and b' chains.

It is found in the cell inner membrane. F(1)F(0) ATP synthase produces ATP from ADP in the presence of a proton or sodium gradient. F-type ATPases consist of two structural domains, F(1) containing the extramembraneous catalytic core and F(0) containing the membrane proton channel, linked together by a central stalk and a peripheral stalk. During catalysis, ATP synthesis in the catalytic domain of F(1) is coupled via a rotary mechanism of the central stalk subunits to proton translocation. Functionally, this protein is part of the stalk that links CF(0) to CF(1). It either transmits conformational changes from CF(0) to CF(1) or is implicated in proton conduction. The chain is ATP synthase subunit delta from Rhodopseudomonas palustris (strain BisB18).